The sequence spans 336 residues: Ketol-acid reductoisomerase (NADP(+)) (336 aa).

Residues 1–182 (MAVIYYDKDA…GVTRAGVIET (182 aa)) form the KARI N-terminal Rossmann domain. NADP(+) is bound by residues 25 to 28 (YGSQ), Arg-48, Ser-51, Ser-53, and 83 to 86 (DENQ). Residue His-108 is part of the active site. An NADP(+)-binding site is contributed by Gly-134. The KARI C-terminal knotted domain occupies 183–328 (TFKEETETDL…KELRKMMPWL (146 aa)). Asp-191, Glu-195, Glu-227, and Glu-231 together coordinate Mg(2+). Ser-252 contacts substrate.

Belongs to the ketol-acid reductoisomerase family. Requires Mg(2+) as cofactor.

It catalyses the reaction (2R)-2,3-dihydroxy-3-methylbutanoate + NADP(+) = (2S)-2-acetolactate + NADPH + H(+). It carries out the reaction (2R,3R)-2,3-dihydroxy-3-methylpentanoate + NADP(+) = (S)-2-ethyl-2-hydroxy-3-oxobutanoate + NADPH + H(+). The protein operates within amino-acid biosynthesis; L-isoleucine biosynthesis; L-isoleucine from 2-oxobutanoate: step 2/4. It participates in amino-acid biosynthesis; L-valine biosynthesis; L-valine from pyruvate: step 2/4. Functionally, involved in the biosynthesis of branched-chain amino acids (BCAA). Catalyzes an alkyl-migration followed by a ketol-acid reduction of (S)-2-acetolactate (S2AL) to yield (R)-2,3-dihydroxy-isovalerate. In the isomerase reaction, S2AL is rearranged via a Mg-dependent methyl migration to produce 3-hydroxy-3-methyl-2-ketobutyrate (HMKB). In the reductase reaction, this 2-ketoacid undergoes a metal-dependent reduction by NADPH to yield (R)-2,3-dihydroxy-isovalerate. The chain is Ketol-acid reductoisomerase (NADP(+)) from Thermotoga petrophila (strain ATCC BAA-488 / DSM 13995 / JCM 10881 / RKU-1).